The sequence spans 329 residues: Bifunctional nuclease 2 (329 aa).

The BFN domain maps to Cys-121–Val-256. The UVR domain maps to Asp-287 to Lys-322.

The protein belongs to the bifunctional nuclease family.

Its subcellular location is the nucleus. Bifunctional nuclease with both RNase and DNase activities. Involved in basal defense response. Participates in abscisic acid-derived callose deposition following infection by a necrotrophic pathogen. The protein is Bifunctional nuclease 2 (BBD2) of Arabidopsis thaliana (Mouse-ear cress).